The chain runs to 69 residues: Amphipathic peptide StCT2 (69 aa).

Residues 1-23 (MKTQFAVLIISMILMQMLVQTEA) form the signal peptide. At Ile-37 the chain carries Isoleucine amide. The propeptide occupies 41 to 69 (SLRNQDQFDNMFDSDLSDADLKLLDDLFD).

Belongs to the non-disulfide-bridged peptide (NDBP) superfamily. Short antimicrobial peptide (group 4) family. Expressed by the venom gland.

The protein resides in the secreted. The protein localises to the target cell membrane. Antimicrobial peptide that is rapidly bactericidal against Gram-positive bacteria. In Scorpiops tibetanus (Scorpion), this protein is Amphipathic peptide StCT2.